Here is a 77-residue protein sequence, read N- to C-terminus: Liver-expressed antimicrobial peptide 2 (77 aa).

A signal peptide spans 1 to 22 (MWHLKLFAVLVICLLLAVQVHG). Positions 23–37 (SPIPELSSAKRRPRR) are excised as a propeptide. 2 disulfides stabilise this stretch: cysteine 54/cysteine 65 and cysteine 60/cysteine 70.

The protein belongs to the LEAP2 family.

It is found in the secreted. In terms of biological role, has an antimicrobial activity. This chain is Liver-expressed antimicrobial peptide 2 (LEAP2), found in Sus scrofa (Pig).